The following is a 170-amino-acid chain: Cysteine-rich uncharacterized protein 241L (170 aa).

This chain is Cysteine-rich uncharacterized protein 241L, found in Acheta domesticus (House cricket).